A 66-amino-acid polypeptide reads, in one-letter code: Regulator of G-protein signaling 11 (66 aa).

Residues 1–66 enclose the RGS domain; sequence EACEELRFGG…DAAQLHIYML (66 aa).

As to quaternary structure, heterodimer with Gbeta5. Interacts with RGS7BP, leading to regulate the subcellular location of the heterodimer formed with Gbeta5.

In terms of biological role, inhibits signal transduction by increasing the GTPase activity of G protein alpha subunits thereby driving them into their inactive GDP-bound form. This Rattus norvegicus (Rat) protein is Regulator of G-protein signaling 11 (Rgs11).